A 718-amino-acid chain; its full sequence is MMEELHSLDPRRQELLEARFTGVGVSKGPLNSESSNQSLCSVGSLSDKEVETPEKKQNDQRNRKRKAEPYDTSQGKGTPRGHKISDYFERRAEQPLYGLDGSAAKEASEEQSALPTLMSVMLAKPRLDTEQLAPRGAGLCFTFVSAQQNSPSSTGSGNTEHSCSSQKQISIQHRQTQSDLTIEKISALENSKNSDLEKKEGRIDDLLRANCDLRRQIDEQQKMLEKYKERLNRCVTMSKKLLIEKSKQEKMACRDKSMQDRLRLGHFTTVRHGASFTEQWTDGYAFQNLIKQQERINSQREEIERQRKMLAKRKPPAMGQAPPATNEQKQRKSKTNGAENETLTLAEYHEQEEIFKLRLGHLKKEEAEIQAELERLERVRNLHIRELKRIHNEDNSQFKDHPTLNDRYLLLHLLGRGGFSEVYKAFDLTEQRYVAVKIHQLNKNWRDEKKENYHKHACREYRIHKELDHPRIVKLYDYFSLDTDSFCTVLEYCEGNDLDFYLKQHKLMSEKEARSIIMQIVNALKYLNEIKPPIIHYDLKPGNILLVNGTACGEIKITDFGLSKIMDDDSYNSVDGMELTSQGAGTYWYLPPECFVVGKEPPKISNKVDVWSVGVIFYQCLYGRKPFGHNQSQQDILQENTILKATEVQFPPKPVVTPEAKAFIRRCLAYRKEDRIDVQQLACDPYLLPHIRKSVSTSSPAGAAIASTSGASNNSSSN.

Residues 24 to 85 (GVSKGPLNSE…KGTPRGHKIS (62 aa)) are disordered. Residues 29–44 (PLNSESSNQSLCSVGS) show a composition bias toward polar residues. The span at 46-61 (SDKEVETPEKKQNDQR) shows a compositional bias: basic and acidic residues. A phosphoserine mark is found at Ser73, Gln94, Leu99, and Ser102. Residues 147–176 (QQNSPSSTGSGNTEHSCSSQKQISIQHRQT) are disordered. The required for interaction with TLK1 and DYNLL1/LC8 stretch occupies residues 193–244 (NSDLEKKEGRIDDLLRANCDLRRQIDEQQKMLEKYKERLNRCVTMSKKLLIE). Coiled-coil stretches lie at residues 193–244 (NSDL…LLIE), 285–315 (AFQN…KRKP), and 349–397 (HEQE…DNSQ). A disordered region spans residues 310-337 (LAKRKPPAMGQAPPATNEQKQRKSKTNG). Residues 408–687 (YLLLHLLGRG…VQQLACDPYL (280 aa)) form the Protein kinase domain. ATP-binding positions include 414 to 422 (LGRGGFSEV) and Lys437. Asp538 functions as the Proton acceptor in the catalytic mechanism. The residue at position 696 (Ser696) is a Phosphoserine; by CHEK1.

Belongs to the protein kinase superfamily. Ser/Thr protein kinase family. As to quaternary structure, monomer. May form homodimers; homodimerization may enhance autophosphoylation and enzymatic activity. Heterodimer with TLK1. Interacts with YWHAZ; association with 14-3-3 proteins such as YWHAZ regulates subcellular location. May also interact with FEZ1/LZTS1 and FEZ2. Interacts with CHD7 and CHD8. Interacts with DYNLL1/LC8. The cofactor is Mg(2+). Phosphorylated at Ser-696, probably by CHEK1. Post-translationally, autophosphorylated; phosphorylation promotes the assembly of higher order oligomers and enzymatic activity. Ubiquitously expressed in all tissues examined, with high levels in heart and testis, in particular the pachytene spermatocytes and in round spermatids. Some evidence for the existence of a testis-specific isoform suggesting a role in spermatogenesis.

It is found in the nucleus. Its subcellular location is the nucleoplasm. The protein localises to the cytoplasm. It localises to the perinuclear region. The protein resides in the cytoskeleton. The enzyme catalyses L-seryl-[protein] + ATP = O-phospho-L-seryl-[protein] + ADP + H(+). It catalyses the reaction L-threonyl-[protein] + ATP = O-phospho-L-threonyl-[protein] + ADP + H(+). Its activity is regulated as follows. Cell cycle-regulated, with maximal activity in the S-phase. Rapidly and transiently inhibited by phosphorylation following the generation of DNA double-stranded breaks during S-phase, probably by CHEK1, possibly at Ser-696. This inhibition is cell cycle checkpoint- and ATM-dependent. In terms of biological role, serine/threonine-protein kinase involved in the process of chromatin assembly and probably also DNA replication, transcription, repair, and chromosome segregation. Phosphorylates the chromatin assembly factors ASF1A and ASF1B. Phosphorylation of ASF1A prevents its proteasome-mediated degradation, thereby enhancing chromatin assembly. Negative regulator of amino acid starvation-induced autophagy. Its function is as follows. Testis-specific isoforms may play a role in spermatogenesis. Highly expressed in embryos throughout development. The chain is Serine/threonine-protein kinase tousled-like 2 (Tlk2) from Mus musculus (Mouse).